Here is a 252-residue protein sequence, read N- to C-terminus: Acyltransferase PGAP2 (252 aa).

The Cytoplasmic segment spans residues Met1–Ala22. The chain crosses the membrane as a helical span at residues Val23–Phe43. Residues Asn44–Arg77 lie on the Lumenal side of the membrane. A helical membrane pass occupies residues Leu78 to Tyr98. The Cytoplasmic portion of the chain corresponds to Gln99–Leu111. The chain crosses the membrane as a helical span at residues Cys112–Val132. Residues Ser133–Lys142 are Lumenal-facing. Residues Leu143 to Trp163 traverse the membrane as a helical segment. Over Arg164–Arg184 the chain is Cytoplasmic. The helical transmembrane segment at Leu185–Met205 threads the bilayer. Residues Tyr206–Glu208 are Lumenal-facing. A helical transmembrane segment spans residues Ala209–Phe229. Residues His230–Ile252 are Cytoplasmic-facing.

It belongs to the PGAP2 family.

The protein resides in the golgi apparatus membrane. Involved in the fatty acid remodeling steps of GPI-anchor maturation where the unsaturated acyl chain at sn-2 of inositol phosphate is replaced by a saturated stearoyl chain. May catalyze the second step of the fatty acid remodeling, by reacylating a lyso-GPI intermediate at sn-2 of inositol phosphate by a saturated chain. The fatty acid remodeling steps is critical for the integration of GPI-APs into lipid rafts. This is Acyltransferase PGAP2 from Xenopus tropicalis (Western clawed frog).